We begin with the raw amino-acid sequence, 360 residues long: MTGISRRTFGLAAGFGAIGAGGLGGGCSTRSGPTPTPEPASRGVGVVLSHEQFRTDRLVAHAQAAEQAGFRYVWASDHLQPWQDNEGHSMFPWLTLALVGNSTSSILFGTGVTCPIYRYHPATVAQAFASLAILNPGRVFLGLGTGERLNEQAATDTFGNYRERHDRLIEAIVLIRQLWSGERISFTGHYFRTDELKLYDTPAMPPPIFVAASGPQSATLAGRYGDGWIAQARDINDAKLLAAFAAGAQAAGRDPTTLGKRAELFAVVGDDKAAARAADLWRFTAGAVDQPNPVEIQRAAESNPIEKVLANWAVGTDPGVHIGAVQAVLDAGAVPFLHFPQDDPITAIDFYRTNVLPELR.

The segment at residues 1–40 (MTGISRRTFGLAAGFGAIGAGGLGGGCSTRSGPTPTPEPA) is a signal peptide (tat-type signal). Aspartate 77 contributes to the coenzyme F420-(gamma-Glu)n binding site. Histidine 78 (proton donor) is an active-site residue. 145–146 (TG) is a binding site for coenzyme F420-(gamma-Glu)n. The active-site Proton acceptor is the glutamate 147. Coenzyme F420-(gamma-Glu)n contacts are provided by residues asparagine 150 and 213-214 (SG).

The protein belongs to the F420-dependent hydroxymycolic acid dehydrogenase family. Homodimer. Post-translationally, is exported by the Tat system. The position of the signal peptide cleavage has not been experimentally proven. May be lipidated.

It is found in the cell envelope. The protein operates within lipid metabolism; mycolic acid biosynthesis. Is inhibited by the anti-tuberculous drug PA-824, a bicyclic 4-nitroimidazole class compound. Therefore, this is consistent with the finding that PA-824 inhibits the formation of K-MAs and causes an accumulation of hydroxymycolic acids (H-MAs) in M.tuberculosis. In terms of biological role, catalyzes the coenzyme F420-dependent oxidation of hydroxymycolic acids (H-MAs) to ketomycolic acids (K-MAs), a lipid class making up the mycobacterial pseudo-outer membrane and over one-third of the dry weight of M.tuberculosis. Does not exhibit F420-dependent glucose-6-phosphate dehydrogenase (FGD) activity. In Mycobacterium tuberculosis (strain ATCC 25618 / H37Rv), this protein is F420-dependent hydroxymycolic acid dehydrogenase.